A 281-amino-acid chain; its full sequence is Phosphatidylglycerol--prolipoprotein diacylglyceryl transferase (281 aa).

A run of 7 helical transmembrane segments spans residues 11–31, 57–77, 89–109, 121–141, 194–214, 222–242, and 255–275; these read IIFT…VISF, LLYS…IIFY, VFYI…AIIV, ILEI…AGRI, PTQL…IYFF, GSIS…IEFF, and IITM…IIMY. Residue arginine 140 coordinates a 1,2-diacyl-sn-glycero-3-phospho-(1'-sn-glycerol).

This sequence belongs to the Lgt family.

Its subcellular location is the cell inner membrane. It catalyses the reaction L-cysteinyl-[prolipoprotein] + a 1,2-diacyl-sn-glycero-3-phospho-(1'-sn-glycerol) = an S-1,2-diacyl-sn-glyceryl-L-cysteinyl-[prolipoprotein] + sn-glycerol 1-phosphate + H(+). It participates in protein modification; lipoprotein biosynthesis (diacylglyceryl transfer). Catalyzes the transfer of the diacylglyceryl group from phosphatidylglycerol to the sulfhydryl group of the N-terminal cysteine of a prolipoprotein, the first step in the formation of mature lipoproteins. The polypeptide is Phosphatidylglycerol--prolipoprotein diacylglyceryl transferase (Buchnera aphidicola subsp. Acyrthosiphon pisum (strain 5A)).